The following is a 397-amino-acid chain: Acetate kinase 2 (397 aa).

Asn-10 contributes to the Mg(2+) binding site. Lys-17 serves as a coordination point for ATP. Arg-90 serves as a coordination point for substrate. Asp-147 (proton donor/acceptor) is an active-site residue. ATP-binding positions include 207-211, 281-283, and 329-333; these read HLGNG, DAR, and GIGEN. Glu-385 serves as a coordination point for Mg(2+).

The protein belongs to the acetokinase family. In terms of assembly, homodimer. It depends on Mg(2+) as a cofactor. Mn(2+) serves as cofactor.

It localises to the cytoplasm. It catalyses the reaction acetate + ATP = acetyl phosphate + ADP. It participates in metabolic intermediate biosynthesis; acetyl-CoA biosynthesis; acetyl-CoA from acetate: step 1/2. Its function is as follows. Catalyzes the formation of acetyl phosphate from acetate and ATP. Can also catalyze the reverse reaction. The polypeptide is Acetate kinase 2 (Vibrio cholerae serotype O1 (strain ATCC 39315 / El Tor Inaba N16961)).